Consider the following 39-residue polypeptide: Neuropeptide F (39 aa).

A Phenylalanine amide modification is found at Phe-39.

Belongs to the NPY family. As to expression, neuronal somata and fibers.

The protein localises to the secreted. May have an important physiological role in neuroregulation. This is Neuropeptide F from Cornu aspersum (Brown garden snail).